We begin with the raw amino-acid sequence, 225 residues long: PKHD-type hydroxylase HEAR3399 (225 aa).

One can recognise a Fe2OG dioxygenase domain in the interval 77-177; it reads RYMPPLFNRY…RVCSFFWLQS (101 aa). H95, D97, and H158 together coordinate Fe cation. R168 contributes to the 2-oxoglutarate binding site.

Fe(2+) is required as a cofactor. The cofactor is L-ascorbate.

The polypeptide is PKHD-type hydroxylase HEAR3399 (Herminiimonas arsenicoxydans).